Reading from the N-terminus, the 159-residue chain is Cyclic pyranopterin monophosphate synthase (159 aa).

Substrate contacts are provided by residues 75 to 77 and 113 to 114; these read LCH and ME. Aspartate 128 is a catalytic residue.

It belongs to the MoaC family. As to quaternary structure, homohexamer; trimer of dimers.

The catalysed reaction is (8S)-3',8-cyclo-7,8-dihydroguanosine 5'-triphosphate = cyclic pyranopterin phosphate + diphosphate. It participates in cofactor biosynthesis; molybdopterin biosynthesis. Functionally, catalyzes the conversion of (8S)-3',8-cyclo-7,8-dihydroguanosine 5'-triphosphate to cyclic pyranopterin monophosphate (cPMP). This Aliivibrio fischeri (strain MJ11) (Vibrio fischeri) protein is Cyclic pyranopterin monophosphate synthase.